Here is a 1395-residue protein sequence, read N- to C-terminus: uncharacterized protein (1395 aa).

89–96 (AYKKWGKS) serves as a coordination point for ATP. Disordered regions lie at residues 146–166 (EEKI…LSPP) and 205–391 (SSSS…MENR). Composition is skewed to low complexity over residues 155-166 (GSPSPEAELSPP) and 205-222 (SSSS…TSSP). A compositionally biased stretch (basic and acidic residues) spans 230 to 269 (EVTKERSSEVPTTVHEKTQSKSKNEKENKFSNGTIEEKPA). Over residues 287–301 (SWSSGSSEAGSSSSG) the composition is skewed to low complexity. Over residues 313 to 328 (VKVRHKAREIRNKKGR) the composition is skewed to basic residues. Over residues 337–346 (KHGEKAERNI) the composition is skewed to basic and acidic residues. Residues 349–358 (GSSSSSSSGS) are compositionally biased toward low complexity. Positions 369-391 (PLKEIGRKDPGSTEGKDLYMENR) are enriched in basic and acidic residues. A phosphoserine mark is found at serine 814 and serine 1080. The disordered stretch occupies residues 1110 to 1132 (PISASELSPGGGSESEFESEKDE). 2 positions are modified to phosphoserine: serine 1194 and serine 1338. Basic and acidic residues predominate over residues 1346-1359 (TGERDSGAKSDGFR). The interval 1346-1395 (TGERDSGAKSDGFRGKMCSSASSTSEETGSEGGGEWVGPSEEELFSRTHL) is disordered.

This is an uncharacterized protein from Homo sapiens (Human).